Reading from the N-terminus, the 490-residue chain is Stomatal closure-related actin-binding protein 3 (490 aa).

It belongs to the SCAB family. In terms of tissue distribution, expressed in roots, stems, leaves, siliques and flowers.

Its subcellular location is the cytoplasm. It localises to the cytoskeleton. Its function is as follows. Probable plant-specific actin binding protein that bundles and stabilizes microfilaments (MFs). This is Stomatal closure-related actin-binding protein 3 from Arabidopsis thaliana (Mouse-ear cress).